Here is a 159-residue protein sequence, read N- to C-terminus: Ribosomal RNA large subunit methyltransferase H (159 aa).

S-adenosyl-L-methionine is bound by residues Leu76, Gly108, and 127–132; that span reads FGQLTL.

The protein belongs to the RNA methyltransferase RlmH family. Homodimer.

Its subcellular location is the cytoplasm. The enzyme catalyses pseudouridine(1915) in 23S rRNA + S-adenosyl-L-methionine = N(3)-methylpseudouridine(1915) in 23S rRNA + S-adenosyl-L-homocysteine + H(+). In terms of biological role, specifically methylates the pseudouridine at position 1915 (m3Psi1915) in 23S rRNA. The protein is Ribosomal RNA large subunit methyltransferase H of Streptococcus suis (strain 05ZYH33).